We begin with the raw amino-acid sequence, 248 residues long: Protein GrpE (248 aa).

The tract at residues 229-248 (AAPKEDTLPAQENQSSPADS) is disordered. Over residues 238–248 (AQENQSSPADS) the composition is skewed to polar residues.

This sequence belongs to the GrpE family. Homodimer.

Its subcellular location is the cytoplasm. In terms of biological role, participates actively in the response to hyperosmotic and heat shock by preventing the aggregation of stress-denatured proteins, in association with DnaK and GrpE. It is the nucleotide exchange factor for DnaK and may function as a thermosensor. Unfolded proteins bind initially to DnaJ; upon interaction with the DnaJ-bound protein, DnaK hydrolyzes its bound ATP, resulting in the formation of a stable complex. GrpE releases ADP from DnaK; ATP binding to DnaK triggers the release of the substrate protein, thus completing the reaction cycle. Several rounds of ATP-dependent interactions between DnaJ, DnaK and GrpE are required for fully efficient folding. In Nostoc sp. (strain PCC 7120 / SAG 25.82 / UTEX 2576), this protein is Protein GrpE.